The sequence spans 158 residues: L-alanine exporter AlaE (158 aa).

4 helical membrane passes run 23-43, 53-73, 92-112, and 117-137; these read FAMV…VSGM, LVAI…RDAV, VIAY…FVGA, and IITA…AYGY.

Belongs to the AlaE exporter family.

It localises to the cell inner membrane. Functionally, exports L-alanine. The polypeptide is L-alanine exporter AlaE (Cronobacter sakazakii (strain ATCC BAA-894) (Enterobacter sakazakii)).